A 368-amino-acid chain; its full sequence is Zinc finger protein 24 (368 aa).

A Glycyl lysine isopeptide (Lys-Gly) (interchain with G-Cter in SUMO2) cross-link involves residue K22. A Glycyl lysine isopeptide (Lys-Gly) (interchain with G-Cter in SUMO1); alternate cross-link involves residue K27. K27 participates in a covalent cross-link: Glycyl lysine isopeptide (Lys-Gly) (interchain with G-Cter in SUMO2); alternate. The 83-residue stretch at 52 to 134 (RQRFRQFGYQ…AVLEDLESEL (83 aa)) folds into the SCAN box domain. 2 positions are modified to phosphoserine: S132 and S142. Glycyl lysine isopeptide (Lys-Gly) (interchain with G-Cter in SUMO2) cross-links involve residues K147, K177, and K236. A C2H2-type 1 zinc finger spans residues 251–273 (HICDECGKHFSQGSALILHQRIH). The segment at 251–301 (HICDECGKHFSQGSALILHQRIHSGEKPYGCVECGKAFSRSSILVQHQRVH) is necessary and sufficient for nuclear localization. At S274 the chain carries Phosphoserine. Residues K277 and K286 each participate in a glycyl lysine isopeptide (Lys-Gly) (interchain with G-Cter in SUMO2) cross-link. C2H2-type zinc fingers lie at residues 279–301 (YGCVECGKAFSRSSILVQHQRVH), 307–329 (YKCLECGKAFSQNSGLINHQRIH), and 335–357 (YECVQCGKSYSQSSNLFRHQRRH). S292 is subject to Phosphoserine. Y335 carries the phosphotyrosine modification. Residues K361 and K367 each participate in a glycyl lysine isopeptide (Lys-Gly) (interchain with G-Cter in SUMO2) cross-link.

This sequence belongs to the krueppel C2H2-type zinc-finger protein family. Sumoylated. In terms of tissue distribution, widely expressed with highest levels in heart, brain, liver, skeletal muscle, kidney and testis and very low levels in spleen and lung.

Its subcellular location is the nucleus. Functionally, transcription factor required for myelination of differentiated oligodendrocytes. Required for the conversion of oligodendrocytes from the premyelinating to the myelinating state. In the developing central nervous system (CNS), involved in the maintenance in the progenitor stage by promoting the cell cycle. Specifically binds to the 5'-TCAT-3' DNA sequence. Has transcription repressor activity in vitro. This Mus musculus (Mouse) protein is Zinc finger protein 24.